Reading from the N-terminus, the 205-residue chain is Holliday junction branch migration complex subunit RuvA (205 aa).

A domain I region spans residues 1–62 (MFEYVTGYVE…EDIMALYGFK (62 aa)). Positions 63-141 (TREERLLFTK…DVVPDAFVDL (79 aa)) are domain II. Residues 142–152 (FSDTESFDTKK) are flexible linker. A domain III region spans residues 153-205 (GSSVELDEALEALRALGYAEREVSRVVPELLKESLTTDQYIKKALSLLLNGKR).

It belongs to the RuvA family. In terms of assembly, homotetramer. Forms an RuvA(8)-RuvB(12)-Holliday junction (HJ) complex. HJ DNA is sandwiched between 2 RuvA tetramers; dsDNA enters through RuvA and exits via RuvB. An RuvB hexamer assembles on each DNA strand where it exits the tetramer. Each RuvB hexamer is contacted by two RuvA subunits (via domain III) on 2 adjacent RuvB subunits; this complex drives branch migration. In the full resolvosome a probable DNA-RuvA(4)-RuvB(12)-RuvC(2) complex forms which resolves the HJ.

It is found in the cytoplasm. Its function is as follows. The RuvA-RuvB-RuvC complex processes Holliday junction (HJ) DNA during genetic recombination and DNA repair, while the RuvA-RuvB complex plays an important role in the rescue of blocked DNA replication forks via replication fork reversal (RFR). RuvA specifically binds to HJ cruciform DNA, conferring on it an open structure. The RuvB hexamer acts as an ATP-dependent pump, pulling dsDNA into and through the RuvAB complex. HJ branch migration allows RuvC to scan DNA until it finds its consensus sequence, where it cleaves and resolves the cruciform DNA. This chain is Holliday junction branch migration complex subunit RuvA, found in Bacillus mycoides (strain KBAB4) (Bacillus weihenstephanensis).